Reading from the N-terminus, the 366-residue chain is Ribosomal RNA large subunit methyltransferase M (366 aa).

S-adenosyl-L-methionine contacts are provided by residues S188, 221–224, D240, D260, and D277; that span reads CPGG. K306 functions as the Proton acceptor in the catalytic mechanism.

This sequence belongs to the class I-like SAM-binding methyltransferase superfamily. RNA methyltransferase RlmE family. RlmM subfamily. Monomer.

It localises to the cytoplasm. It catalyses the reaction cytidine(2498) in 23S rRNA + S-adenosyl-L-methionine = 2'-O-methylcytidine(2498) in 23S rRNA + S-adenosyl-L-homocysteine + H(+). Functionally, catalyzes the 2'-O-methylation at nucleotide C2498 in 23S rRNA. The polypeptide is Ribosomal RNA large subunit methyltransferase M (Citrobacter koseri (strain ATCC BAA-895 / CDC 4225-83 / SGSC4696)).